The chain runs to 230 residues: Sugar fermentation stimulation protein homolog (230 aa).

It belongs to the SfsA family.

The protein is Sugar fermentation stimulation protein homolog of Thermoanaerobacter pseudethanolicus (strain ATCC 33223 / 39E) (Clostridium thermohydrosulfuricum).